A 1857-amino-acid chain; its full sequence is Ankyrin repeat domain-containing protein 31 (1857 aa).

Disordered regions lie at residues 1–30 (MENG…EDEE) and 195–215 (SEPG…DEES). Residues 195–207 (SEPGEEVTQTMTS) show a composition bias toward polar residues. ANK repeat units follow at residues 475 to 504 (FGEN…NVNQ), 508 to 537 (DGWT…DVNV), and 541 to 570 (YQIT…DPLF). Polar residues predominate over residues 676-691 (KFGKSNLNSVKNSRTN). Disordered regions lie at residues 676–711 (KFGK…VDDR), 813–844 (VTTH…KGKA), 995–1038 (RDSS…TVVH), 1046–1065 (KAEK…NTDF), and 1075–1137 (ANSS…QNFR). Residues 692–704 (VSKRKGQKNRQQK) are compositionally biased toward basic residues. The segment covering 814–839 (TTHQQPHTNQEQYSSPYKSLGNNSSN) has biased composition (polar residues). Basic and acidic residues predominate over residues 1008 to 1019 (SLERKQDTDKNY). A compositionally biased stretch (polar residues) spans 1023 to 1032 (GPNTSSSSRP). A compositionally biased stretch (basic and acidic residues) spans 1082–1136 (QRKEKENVRKSDAELTHNDSEAERTLKSCEEKKKNMDSETHSPCDIQEHRKDQNF). 3 ANK repeats span residues 1162 to 1191 (KGES…DVNL), 1195 to 1224 (AGWT…NVNC), and 1228 to 1257 (DGIV…NPNQ). Disordered regions lie at residues 1457 to 1479 (NSDI…AHAQ), 1540 to 1570 (GGLL…AENS), 1609 to 1640 (DPHS…AEPL), and 1663 to 1697 (AAAA…TTPR). Residues 1555 to 1570 (ASSSQPAALTPHAENS) show a composition bias toward polar residues. Low complexity predominate over residues 1663-1683 (AAAASHTDSTQSSLSSASAHQ). Positions 1687 to 1782 (KTVPHRNTTP…TYLGRELVKC (96 aa)) constitute an RAMA domain.

Interacts with REC114; the interaction is direct. Interacts with IHO1. In terms of tissue distribution, present in meiotic cells (at protein level).

The protein resides in the nucleus. The protein localises to the chromosome. Its function is as follows. Required for DNA double-strand breaks (DSBs) formation during meiotic recombination. Regulates the spatial and temporal patterns of pre-DSB recombinosome assembly and recombination activity by acting as a scaffold that anchors REC114 and other factors to specific genomic locations, thereby regulating DSB formation. Plays a key role in recombination in the pseudoautosomal regions of sex chromosomes. In Mus musculus (Mouse), this protein is Ankyrin repeat domain-containing protein 31.